The sequence spans 370 residues: Flagellar P-ring protein (370 aa).

Positions 1–28 (MTFFTRCFRRGALLFLLAVLLLPSPAQA) are cleaved as a signal peptide.

Belongs to the FlgI family. In terms of assembly, the basal body constitutes a major portion of the flagellar organelle and consists of four rings (L,P,S, and M) mounted on a central rod.

It localises to the periplasm. It is found in the bacterial flagellum basal body. In terms of biological role, assembles around the rod to form the L-ring and probably protects the motor/basal body from shearing forces during rotation. In Oleidesulfovibrio alaskensis (strain ATCC BAA-1058 / DSM 17464 / G20) (Desulfovibrio alaskensis), this protein is Flagellar P-ring protein.